A 202-amino-acid polypeptide reads, in one-letter code: Na(+)-translocating NADH-quinone reductase subunit E (202 aa).

6 consecutive transmembrane segments (helical) span residues A11 to V31, F39 to I59, F81 to A101, G114 to V134, V144 to V164, and L180 to V200.

The protein belongs to the NqrDE/RnfAE family. Composed of six subunits; NqrA, NqrB, NqrC, NqrD, NqrE and NqrF.

The protein resides in the cell inner membrane. The enzyme catalyses a ubiquinone + n Na(+)(in) + NADH + H(+) = a ubiquinol + n Na(+)(out) + NAD(+). Its function is as follows. NQR complex catalyzes the reduction of ubiquinone-1 to ubiquinol by two successive reactions, coupled with the transport of Na(+) ions from the cytoplasm to the periplasm. NqrA to NqrE are probably involved in the second step, the conversion of ubisemiquinone to ubiquinol. The polypeptide is Na(+)-translocating NADH-quinone reductase subunit E (Idiomarina loihiensis (strain ATCC BAA-735 / DSM 15497 / L2-TR)).